Reading from the N-terminus, the 553-residue chain is Putative transport protein KPK_0013 (553 aa).

The next 5 membrane-spanning stretches (helical) occupy residues 4–24, 28–48, 65–85, 95–115, and 158–178; these read IALTVSVLALVAVVGLWIGNV, GVGFGIGGVLFGGIIVGHFVD, FGLILFVYTIGIQVGPGFFAS, LFAILIVILGGLVTAVLHKLF, and MSYAMAYPFGICGILLTMWLV. RCK C-terminal domains lie at 192-276 and 279-361; these read RFEE…VIGQ and ATSL…ELGN. Helical transmembrane passes span 371–391, 403–425, 437–457, 464–484, 493–513, and 532–552; these read MLPVFIGIGLGVLLGSIPLFI, AGGPLIMALILGRIGSIGKLYWF, LGIVLFLAVVGLKSGGDFVAT, LSWIAYGIFITAIPLLTVGIL, YLTLCGMLAGSMTDPPALAFA, and PLVMFLRIITPQLLAVLFWGL.

It belongs to the AAE transporter (TC 2.A.81) family. YidE subfamily.

It is found in the cell membrane. The polypeptide is Putative transport protein KPK_0013 (Klebsiella pneumoniae (strain 342)).